Reading from the N-terminus, the 186-residue chain is Phosphopantetheine adenylyltransferase (186 aa).

Threonine 14 contributes to the substrate binding site. ATP is bound by residues 14–15 and histidine 22; that span reads TF. Lysine 46, leucine 78, and arginine 92 together coordinate substrate. Residues 93 to 95, glutamate 103, and 128 to 134 contribute to the ATP site; these read GLR and WLYISST.

The protein belongs to the bacterial CoaD family. As to quaternary structure, homohexamer. The cofactor is Mg(2+).

It localises to the cytoplasm. It carries out the reaction (R)-4'-phosphopantetheine + ATP + H(+) = 3'-dephospho-CoA + diphosphate. It participates in cofactor biosynthesis; coenzyme A biosynthesis; CoA from (R)-pantothenate: step 4/5. In terms of biological role, reversibly transfers an adenylyl group from ATP to 4'-phosphopantetheine, yielding dephospho-CoA (dPCoA) and pyrophosphate. The sequence is that of Phosphopantetheine adenylyltransferase from Nitratidesulfovibrio vulgaris (strain ATCC 29579 / DSM 644 / CCUG 34227 / NCIMB 8303 / VKM B-1760 / Hildenborough) (Desulfovibrio vulgaris).